Consider the following 2474-residue polypeptide: MNKYINKYTTPPNLLSLRQRAEGKHRTRKKLTHKSHSHDDEMSTTSNTDSNHNGPNDSGRVITGSAGHIGKISFVDSELDTTFSTLNLIFDKLKSDVPQERASGANELSTTLTSLAREVSAEQFQRFSNSLNNKIFELIHGFTSSEKIGGILAVDTLISFYLSTEELPNQTSRLANYLRVLIPSSDIEVMRLAANTLGRLTVPGGTLTSDFVEFEVRTCIDWLTLTADNNSSSSKLEYRRHAALLIIKALADNSPYLLYPYVNSILDNIWVPLRDAKLIIRLDAAVALGKCLTIIQDRDPALGKQWFQRLFQGCTHGLSLNTNDSVHATLLVFRELLSLKAPYLRDKYDDIYKSTMKYKEYKFDVIRREVYAILPLLAAFDPAIFTKKYLDRIMVHYLRYLKNIDMNAANNSDKPFILVSIGDIAFEVGSSISPYMTLILDNIREGLRTKFKVRKQFEKDLFYCIGKLACALGPAFAKHLNKDLLNLMLNCPMSDHMQETLMILNEKIPSLESTVNSRILNLLSISLSGEKFIQSNQYDFNNQFSIEKARKSRNQSFMKKTGESNDDITDAQILIQCFKMLQLIHHQYSLTEFVRLITISYIEHEDSSVRKLAALTSCDLFIKDDICKQTSVHALHSVSEVLSKLLMIAITDPVAEIRLEILQHLGSNFDPQLAQPDNLRLLFMALNDEIFGIQLEAIKIIGRLSSVNPAYVVPSLRKTLLELLTQLKFSNMPKKKEESATLLCTLINSSDEVAKPYIDPILDVILPKCQDASSAVASTALKVLGELSVVGGKEMTRYLKELMPLIINTFQDQSNSFKRDAALTTLGQLAASSGYVVGPLLDYPELLGILINILKTENNPHIRRGTVRLIGILGALDPYKHREIEVTSNSKSSVEQNAPSIDIALLMQGVSPSNDEYYPTVVIHNLMKILNDPSLSIHHTAAIQAIMHIFQNLGLRCVSFLDQIIPGIILVMRSCPPSQLDFYFQQLGSLISIVKQHIRPHVEKIYGVIREFFPIIKLQITIISVIESISKALEGEFKRFVPETLTFFLDILENDQSNKRIVPIRILKSLVTFGPNLEDYSHLIMPIVVRMTEYSAGSLKKISIITLGRLAKNINLSEMSSRIVQALVRILNNGDRELTKATMNTLSLLLLQLGTDFVVFVPVINKALLRNRIQHSVYDQLVNKLLNNECLPTNIIFDKENEVPERKNYEDEMQVTKLPVNQNILKNAWYCSQQKTKEDWQEWIRRLSIQLLKESPSACLRSCSSLVSVYYPLARELFNASFSSCWVELQTSYQEDLIQALCKALSSSENPPEIYQMLLNLVEFMEHDDKPLPIPIHTLGKYAQKCHAFAKALHYKEVEFLEEPKNSTIEALISINNQLHQTDSAIGILKHAQQHNELQLKETWYEKLQRWEDALAAYNEKEAAGEDSVEVMMGKLRSLYALGEWEELSKLASEKWGTAKPEVKKAMAPLAAGAAWGLEQWDEIAQYTSVMKSQSPDKEFYDAILCLHRNNFKKAEVHIFNARDLLVTELSALVNESYNRAYNVVVRAQIIAELEEIIKYKKLPQNSDKRLTMRETWNTRLLGCQKNIDVWQRILRVRSLVIKPKEDAQVRIKFANLCRKSGRMALAKKVLNTLLEETDDPDHPNTAKASPPVVYAQLKYLWATGLQDEALKQLINFTSRMAHDLGLDPNNMIAQSVPQQSKRVPRHVEDYTKLLARCFLKQGEWRVCLQPKWRLSNPDSILGSYLLATHFDNTWYKAWHNWALANFEVISMLTSVSKKKQEGSDASSVTDINEFDNGMIGVNTFDAKEVHYSSNLIHRHVIPAIKGFFHSISLSESSSLQDALRLLTLWFTFGGIPEATQAMHEGFNLIQIGTWLEVLPQLISRIHQPNQIVSRSLLSLLSDLGKAHPQALVYPLMVAIKSESLSRQKAALSIIEKMRIHSPVLVDQAELVSHELIRMAVLWHEQWYEGLDDASRQFFGEHNTEKMFAALEPLYEMLKRGPETLREISFQNSFGRDLNDAYEWLMNYKKSKDVSNLNQAWDIYYNVFRKIGKQLPQLQTLELQHVSPKLLSAHDLELAVPGTRASGGKPIVKISKFEPVFSVISSKQRPRKFCIKGSDGKDYKYVLKGHEDIRQDSLVMQLFGLVNTLLQNDAECFRRHLDIQQYPAIPLSPKSGLLGWVPNSDTFHVLIREHREAKKIPLNIEHWVMLQMAPDYDNLTLLQKVEVFTYALNNTEGQDLYKVLWLKSRSSETWLERRTTYTRSLAVMSMTGYILGLGDRHPSNLMLDRITGKVIHIDFGDCFEAAILREKFPEKVPFRLTRMLTYAMEVSGIEGSFRITCENVMKVLRDNKGSLMAILEAFAFDPLINWGFDLPTKKIEEETGIQLPVMNANELLSNGAITEEEVQRVENEHKNAIRNARAMLVLKRITDKLTGNDIRRFNDLDVPEQVDKLIQQATSVENLCQHYIGWCPFW.

Positions 1 to 62 (MNKYINKYTT…NGPNDSGRVI (62 aa)) are disordered. Thr10 carries the phosphothreonine modification. A compositionally biased stretch (basic residues) spans 25–36 (HRTRKKLTHKSH). A compositionally biased stretch (polar residues) spans 43–56 (STTSNTDSNHNGPN). HEAT repeat units lie at residues 588-626 (YSLT…KDDI), 636-674 (HSVS…PQLA), 676-710 (PDNL…VNPA), 756-793 (PYID…VGGK), 797-835 (RYLK…SSGY), 841-879 (LDYP…LDPY), 917-955 (YYPT…NLGL), 1039-1076 (RFVP…FGPN), 1079-1116 (DYSH…NINL), 1118-1155 (EMSS…QLGT), and 1292-1331 (SYQE…DDKP). The FAT domain occupies 1338-1922 (TLGKYAQKCH…VYPLMVAIKS (585 aa)). Residues 2097-2421 (FEPVFSVISS…EHKNAIRNAR (325 aa)) form the PI3K/PI4K catalytic domain. The interval 2103–2109 (VISSKQR) is G-loop. The tract at residues 2276-2284 (GLGDRHPSN) is catalytic loop. The activation loop stretch occupies residues 2296-2321 (HIDFGDCFEAAILREKFPEKVPFRLT). In terms of domain architecture, FATC spans 2442 to 2474 (NDLDVPEQVDKLIQQATSVENLCQHYIGWCPFW).

Belongs to the PI3/PI4-kinase family. In terms of assembly, the target of rapamycin complex 1 (TORC1) is composed of at least KOG1, LST8, TCO89 and either TOR1 (TORC1-A) or TOR2 (TORC1-B). TORC1 binds to and is inhibited by FKBP-rapamycin. Interacts with PIB2; following activation of PIB2 by glutamine. The target of rapamycin complex 2 (TORC2) is composed of at least AVO1, AVO2, BIT61, LST8, TOR2 and TSC11. TORC2 forms a homodimer. Contrary to TORC1, TORC2 does not bind to and is not sensitive to FKBP-rapamycin. Interacts with SLM1 and SLM2.

The protein localises to the cell membrane. Its subcellular location is the vacuole membrane. The enzyme catalyses L-seryl-[protein] + ATP = O-phospho-L-seryl-[protein] + ADP + H(+). The catalysed reaction is L-threonyl-[protein] + ATP = O-phospho-L-threonyl-[protein] + ADP + H(+). It catalyses the reaction a 1,2-diacyl-sn-glycero-3-phospho-(1D-myo-inositol) + ATP = a 1,2-diacyl-sn-glycero-3-phospho-(1D-myo-inositol 4-phosphate) + ADP + H(+). In terms of biological role, phosphatidylinositol 3-kinase homolog, component of both TORC1 and TORC2. TORC1 regulates multiple cellular processes to control cell growth in response to environmental signals. Nutrient limitation and environmental stress signals cause inactivation of TORC1. Active TORC1 positively controls ribosome biogenesis via control of rRNA, ribosomal protein and tRNA gene expression, and rRNA processing. TORC1 positively controls protein biosynthesis by regulation of mRNA stability, translation initiation factor activity, and high-affinity amino acid permeases that serve to provide amino acids for use by the translation machinery. TORC1 also promotes growth by sequestering a number of nutrient and general stress-responsive transcription factors in the cytoplasm. TORC1 negatively controls macroautophagy, a process to recycle surplus cytoplasmic mass under nutrient starvation conditions. TORC1 controls many of these processes via TIP41-TAP42-mediated inhibition of the type 2A-related phosphatases PP2A and SIT4. In nutrient-rich conditions, responsible for the phosphorylation of AGC S6 kinase (S6K) YPK3, activating YPK3 kinase activity and promoting phosphorylation of ribosomal protein S6. Phosphorylates kinase SCH9 at 6 amino acids in the C-terminus, activating SCH9 kinase activity to properly regulate ribosome biogenesis, translation initiation, and entry into stationary phase. TORC2 regulates cell cycle-dependent polarization of the actin-cytoskeleton, cell wall integrity, and receptor endocytosis. TORC2 controls polarity of the actin cytoskeleton, which is required for orienting the secretory pathway toward discrete growth sites, via the RHO1/PKC1/MAPK cell integrity pathway by activating the RHO1 guanine nucleotide exchange factor ROM2. TORC2 phosphorylates the AGC kinase YPK2, an upstream effector of the cell integrity pathway. TORC2 negatively regulates calcineurin-dependent stress signaling via phosphorylation of its effector SLM1-SLM2. The sequence is that of Serine/threonine-protein kinase TOR2 (TOR2) from Saccharomyces cerevisiae (strain ATCC 204508 / S288c) (Baker's yeast).